The primary structure comprises 89 residues: Myrmicitoxin(1)-Pr2c (89 aa).

A signal peptide spans 1 to 23; sequence MEIPKLLYIAVIAIGLSGSLTCA. The propeptide occupies 24–61; that stretch reads TPLANPWADPEAEANPKAKATAEATAEAIAEALAEPEP. Residue N88 is modified to Asparagine amide.

This sequence belongs to the formicidae venom clade 1 family. Expressed by the venom gland.

It is found in the secreted. Vertebrate-selective toxin that causes pain by targeting voltage-gated sodium channels. This chain is Myrmicitoxin(1)-Pr2c, found in Pogonomyrmex rugosus (Desert harvester ant).